The chain runs to 430 residues: Adenylosuccinate synthetase (430 aa).

Residues 12-18 and 40-42 contribute to the GTP site; these read GDEGKGK and GHT. Asp-13 (proton acceptor) is an active-site residue. Residues Asp-13 and Gly-40 each contribute to the Mg(2+) site. IMP is bound by residues 13–16, 38–41, Thr-128, Arg-142, Gln-223, Thr-238, and Arg-302; these read DEGK and NAGH. The Proton donor role is filled by His-41. Residue 298 to 304 coordinates substrate; the sequence is TTTGRPR. Residues Arg-304, 330 to 332, and 412 to 414 contribute to the GTP site; these read SID and SVG.

This sequence belongs to the adenylosuccinate synthetase family. As to quaternary structure, homodimer. Mg(2+) serves as cofactor.

Its subcellular location is the cytoplasm. It catalyses the reaction IMP + L-aspartate + GTP = N(6)-(1,2-dicarboxyethyl)-AMP + GDP + phosphate + 2 H(+). It functions in the pathway purine metabolism; AMP biosynthesis via de novo pathway; AMP from IMP: step 1/2. Its function is as follows. Plays an important role in the de novo pathway of purine nucleotide biosynthesis. Catalyzes the first committed step in the biosynthesis of AMP from IMP. The protein is Adenylosuccinate synthetase of Streptococcus agalactiae serotype Ia (strain ATCC 27591 / A909 / CDC SS700).